Consider the following 416-residue polypeptide: Multifunctional CCA protein (416 aa).

Residues glycine 8 and arginine 11 each contribute to the ATP site. Residues glycine 8 and arginine 11 each contribute to the CTP site. The Mg(2+) site is built by aspartate 21 and aspartate 23. Residues arginine 91, arginine 138, and arginine 141 each coordinate ATP. Residues arginine 91, arginine 138, and arginine 141 each coordinate CTP. Residues 229–331 (TGLHQELVSD…YELLQRCDAF (103 aa)) form the HD domain.

It belongs to the tRNA nucleotidyltransferase/poly(A) polymerase family. Bacterial CCA-adding enzyme type 1 subfamily. Monomer. Can also form homodimers and oligomers. Mg(2+) is required as a cofactor. It depends on Ni(2+) as a cofactor.

It catalyses the reaction a tRNA precursor + 2 CTP + ATP = a tRNA with a 3' CCA end + 3 diphosphate. It carries out the reaction a tRNA with a 3' CCA end + 2 CTP + ATP = a tRNA with a 3' CCACCA end + 3 diphosphate. Functionally, catalyzes the addition and repair of the essential 3'-terminal CCA sequence in tRNAs without using a nucleic acid template. Adds these three nucleotides in the order of C, C, and A to the tRNA nucleotide-73, using CTP and ATP as substrates and producing inorganic pyrophosphate. tRNA 3'-terminal CCA addition is required both for tRNA processing and repair. Also involved in tRNA surveillance by mediating tandem CCA addition to generate a CCACCA at the 3' terminus of unstable tRNAs. While stable tRNAs receive only 3'-terminal CCA, unstable tRNAs are marked with CCACCA and rapidly degraded. The sequence is that of Multifunctional CCA protein from Xylella fastidiosa (strain M23).